A 355-amino-acid polypeptide reads, in one-letter code: Type II restriction enzyme CfrBI (355 aa).

It carries out the reaction Endonucleolytic cleavage of DNA to give specific double-stranded fragments with terminal 5'-phosphates.. Its function is as follows. A P subtype restriction enzyme that recognizes the double-stranded sequence 5'-CCWWGG-3' and cleaves after C-1. The sequence is that of Type II restriction enzyme CfrBI from Citrobacter freundii.